A 348-amino-acid polypeptide reads, in one-letter code: S-adenosylmethionine:tRNA ribosyltransferase-isomerase (348 aa).

Belongs to the QueA family. In terms of assembly, monomer.

The protein localises to the cytoplasm. The catalysed reaction is 7-aminomethyl-7-carbaguanosine(34) in tRNA + S-adenosyl-L-methionine = epoxyqueuosine(34) in tRNA + adenine + L-methionine + 2 H(+). The protein operates within tRNA modification; tRNA-queuosine biosynthesis. Its function is as follows. Transfers and isomerizes the ribose moiety from AdoMet to the 7-aminomethyl group of 7-deazaguanine (preQ1-tRNA) to give epoxyqueuosine (oQ-tRNA). In Amoebophilus asiaticus (strain 5a2), this protein is S-adenosylmethionine:tRNA ribosyltransferase-isomerase.